We begin with the raw amino-acid sequence, 87 residues long: Cell division topological specificity factor (87 aa).

The protein belongs to the MinE family.

Prevents the cell division inhibition by proteins MinC and MinD at internal division sites while permitting inhibition at polar sites. This ensures cell division at the proper site by restricting the formation of a division septum at the midpoint of the long axis of the cell. The chain is Cell division topological specificity factor from Leptothrix cholodnii (strain ATCC 51168 / LMG 8142 / SP-6) (Leptothrix discophora (strain SP-6)).